The chain runs to 187 residues: ATP synthase subunit delta (187 aa).

This sequence belongs to the ATPase delta chain family. F-type ATPases have 2 components, F(1) - the catalytic core - and F(0) - the membrane proton channel. F(1) has five subunits: alpha(3), beta(3), gamma(1), delta(1), epsilon(1). F(0) has three main subunits: a(1), b(2) and c(10-14). The alpha and beta chains form an alternating ring which encloses part of the gamma chain. F(1) is attached to F(0) by a central stalk formed by the gamma and epsilon chains, while a peripheral stalk is formed by the delta and b chains.

The protein localises to the cell membrane. Functionally, f(1)F(0) ATP synthase produces ATP from ADP in the presence of a proton or sodium gradient. F-type ATPases consist of two structural domains, F(1) containing the extramembraneous catalytic core and F(0) containing the membrane proton channel, linked together by a central stalk and a peripheral stalk. During catalysis, ATP synthesis in the catalytic domain of F(1) is coupled via a rotary mechanism of the central stalk subunits to proton translocation. Its function is as follows. This protein is part of the stalk that links CF(0) to CF(1). It either transmits conformational changes from CF(0) to CF(1) or is implicated in proton conduction. The chain is ATP synthase subunit delta from Mesomycoplasma hyopneumoniae (strain 232) (Mycoplasma hyopneumoniae).